We begin with the raw amino-acid sequence, 631 residues long: Poly(A)-specific ribonuclease PARN (631 aa).

A divalent metal cation contacts are provided by D28 and E30. Positions 147-173 (EDRRSQSNGASTMSYISPNSSKTPVSI) are disordered. The segment covering 152–170 (QSNGASTMSYISPNSSKTP) has biased composition (polar residues). An R3H domain is found at 178 to 244 (KGFIDKVVER…ERYIVISKVD (67 aa)). Residues D291 and D381 each contribute to the a divalent metal cation site. The disordered stretch occupies residues 568–631 (SPIQEEAASD…SVLFEVPDTW (64 aa)).

The protein belongs to the CAF1 family. In terms of assembly, component of a complex at least composed of cpeb1, cpsf1, papd4/gld2, pabpc1/ePAB, parn and sympk. It depends on a divalent metal cation as a cofactor. Post-translationally, a 62 kDa form, which is produced by proteolytic cleavage, also exists. As to expression, in retina, it is constitutively present in most retinal cells, including the photoreceptors.

It is found in the cytoplasm. The protein resides in the nucleus. It carries out the reaction Exonucleolytic cleavage of poly(A) to 5'-AMP.. 3'-exoribonuclease that has a preference for poly(A) tails of mRNAs, thereby efficiently degrading poly(A) tails. Exonucleolytic degradation of the poly(A) tail is often the first step in the decay of eukaryotic mRNAs. Required during meiotic maturation to silence certain maternal mRNAs translationally. Does not require an adenosine residue at the 3' end, however, the addition of 25 non-adenylate residues at the 3' terminus, or a 3' terminal phosphate is inhibitory. Involved in dormant mRNAs regulation during oocyte maturation by counteracting polyadenylation mediated by papd4/gld2nt in immature eggs. During maturation it is excluded from the ribonucleoprotein complex, allowing poly(A) elongation by papd4/gld2nt and activation of mRNAs. In Xenopus laevis (African clawed frog), this protein is Poly(A)-specific ribonuclease PARN (parn).